Reading from the N-terminus, the 307-residue chain is Probable thioesterase KK1J (307 aa).

This sequence belongs to the AMT4 thioesterase family.

Its pathway is secondary metabolite biosynthesis. Functionally, probable thioesterase; part of the gene cluster that mediates the biosynthesis of KK-1, a novel cyclic depsipeptide with 10 residues which is a promising active compound with high activity against many plant pathogens, especially Botrytis cinerea. Within the pathway, kk1J is not essential for the biosynthesis of KK-1, but plays a role for efficient production via correction of peptide chain synthesis by kk1B. The nonribosomal peptide synthetase (NRPS) kk1B catalyzes the elongation and cyclization of the decapeptide chain composed of 1 D-lactic acid residue (D-Lac), 1 pipecolic acid residue (Pip), 1 aspartic acid residue (Asp), 1 isoleucine residue (Ile), 1 glycine residue (Gly), 1 tyrosine residue (Tyr) and 4 valine residues (Val). The Asp, Ile and 3 Val residues are N-methylated by the 5 methyltransferase domains from the NRPS (found in modules 3, 5, 6, 7 and 9), whereas the Tyr residue is O-methylated by the cluster encoded O-methyltransferase kk1A. The thioesterase kk1J is likely to be involved in the corrective mechanism of peptide chain synthesis. The D-lactate dehydrogenase kk1H is involved in the synthesis of D-lactic acid from pyruvic acid, which is recognized by the A domain of the first kk1B module. The pyrroline-5-carboxylate reductase kk1I is involved in the synthesis of the L-pipecolic acid residue of KK-1 from delta-1-pyrroline-5-carboxylate (P5C), a metabolic intermediate of lysine. It still is unclear how kk1C and kk1D are involved in the production of KK-1. This chain is Probable thioesterase KK1J, found in Curvularia clavata.